We begin with the raw amino-acid sequence, 1159 residues long: WASH complex subunit 5 (1159 aa).

The protein belongs to the strumpellin family. Component of the WASH complex.

It is found in the early endosome. In terms of biological role, acts at least in part as component of the WASH complex which seems to regulate washc1 nucleation-promoting factor (NPF) activity and is required for its membrane targeting during endosomal sorting. The chain is WASH complex subunit 5 from Xenopus tropicalis (Western clawed frog).